The sequence spans 117 residues: Immunoglobulin heavy variable 1-24 (117 aa).

Residues 1–19 form the signal peptide; the sequence is MDCTWRILFLVAAATGTHA. Positions 20–44 are framework-1; the sequence is QVQLVQSGAEVKKPGASVKVSCKVS. The region spanning 20 to 117 is the Ig-like domain; that stretch reads QVQLVQSGAE…EDTAVYYCAT (98 aa). An intrachain disulfide couples Cys41 to Cys115. Residues 45–52 are complementarity-determining-1; sequence GYTLTELS. A framework-2 region spans residues 53–69; that stretch reads MHWVRQAPGKGLEWMGG. The segment at 70-77 is complementarity-determining-2; sequence FDPEDGET. Positions 78 to 115 are framework-3; the sequence is IYAQKFQGRVTMTEDTSTDTAYMELSSLRSEDTAVYYC. The interval 116–117 is complementarity-determining-3; it reads AT.

In terms of assembly, immunoglobulins are composed of two identical heavy chains and two identical light chains; disulfide-linked.

It localises to the secreted. It is found in the cell membrane. V region of the variable domain of immunoglobulin heavy chains that participates in the antigen recognition. Immunoglobulins, also known as antibodies, are membrane-bound or secreted glycoproteins produced by B lymphocytes. In the recognition phase of humoral immunity, the membrane-bound immunoglobulins serve as receptors which, upon binding of a specific antigen, trigger the clonal expansion and differentiation of B lymphocytes into immunoglobulins-secreting plasma cells. Secreted immunoglobulins mediate the effector phase of humoral immunity, which results in the elimination of bound antigens. The antigen binding site is formed by the variable domain of one heavy chain, together with that of its associated light chain. Thus, each immunoglobulin has two antigen binding sites with remarkable affinity for a particular antigen. The variable domains are assembled by a process called V-(D)-J rearrangement and can then be subjected to somatic hypermutations which, after exposure to antigen and selection, allow affinity maturation for a particular antigen. The protein is Immunoglobulin heavy variable 1-24 of Homo sapiens (Human).